The sequence spans 110 residues: MVKGTPLSGKSLLFALTRLDRNNPEKEWFRTSEIHEVYQTVARDVEVEPKGYNRALELLNKHVTTGVLESKKKERGDQGKFRSYSLQGDVESTRTGLINSTPELQTLMGW.

8–12 (SGKSL) is an ATP binding site.

Belongs to the CDC6/cdc18 family.

Involved in regulation of DNA replication. The protein is ORC1-type DNA replication protein 3 (orc3) of Halobacterium salinarum (strain ATCC 700922 / JCM 11081 / NRC-1) (Halobacterium halobium).